Consider the following 74-residue polypeptide: Small ribosomal subunit protein bS18 (74 aa).

This sequence belongs to the bacterial ribosomal protein bS18 family. Part of the 30S ribosomal subunit. Forms a tight heterodimer with protein bS6.

Binds as a heterodimer with protein bS6 to the central domain of the 16S rRNA, where it helps stabilize the platform of the 30S subunit. This chain is Small ribosomal subunit protein bS18, found in Alkalilimnicola ehrlichii (strain ATCC BAA-1101 / DSM 17681 / MLHE-1).